The chain runs to 245 residues: uncharacterized protein (245 aa).

Basic and acidic residues predominate over residues 162–174 (KEQSDVTTSERTR). Residues 162–183 (KEQSDVTTSERTRSPPGSSKTT) are disordered.

This is an uncharacterized protein from Homo sapiens (Human).